A 538-amino-acid polypeptide reads, in one-letter code: Chaperonin GroEL (538 aa).

ATP-binding positions include 29–32 (TIGP), 86–90 (DGTTT), G413, 476–478 (NAA), and D492.

It belongs to the chaperonin (HSP60) family. Forms a cylinder of 14 subunits composed of two heptameric rings stacked back-to-back. Interacts with the co-chaperonin GroES.

It is found in the cytoplasm. The enzyme catalyses ATP + H2O + a folded polypeptide = ADP + phosphate + an unfolded polypeptide.. In terms of biological role, together with its co-chaperonin GroES, plays an essential role in assisting protein folding. The GroEL-GroES system forms a nano-cage that allows encapsulation of the non-native substrate proteins and provides a physical environment optimized to promote and accelerate protein folding. The polypeptide is Chaperonin GroEL (Staphylococcus aureus (strain bovine RF122 / ET3-1)).